Reading from the N-terminus, the 81-residue chain is Adipogenin (81 aa).

The helical transmembrane segment at 16–36 (FLVFWLCLPVALLLFLLIIWL) threads the bilayer.

This sequence belongs to the adipogenin family. As to expression, highly expressed in subcutaneous, perirenal and mesecentric adipose tissue.

It is found in the membrane. Its subcellular location is the nucleus. Plays a role in stimulating adipocyte differentiation and development. This is Adipogenin from Bos taurus (Bovine).